The primary structure comprises 125 residues: Large ribosomal subunit protein bL17 (125 aa).

Belongs to the bacterial ribosomal protein bL17 family. Part of the 50S ribosomal subunit. Contacts protein L32.

The polypeptide is Large ribosomal subunit protein bL17 (Marinomonas sp. (strain MWYL1)).